We begin with the raw amino-acid sequence, 257 residues long: Acetylglutamate kinase (257 aa).

Substrate-binding positions include 43-44 (GG), arginine 65, and asparagine 157. ATP is bound by residues 180–185 (DVSGIL) and 208–210 (IIT).

The protein belongs to the acetylglutamate kinase family. ArgB subfamily. As to quaternary structure, homodimer.

Its subcellular location is the cytoplasm. It catalyses the reaction N-acetyl-L-glutamate + ATP = N-acetyl-L-glutamyl 5-phosphate + ADP. Its pathway is amino-acid biosynthesis; L-arginine biosynthesis; N(2)-acetyl-L-ornithine from L-glutamate: step 2/4. In terms of biological role, catalyzes the ATP-dependent phosphorylation of N-acetyl-L-glutamate. This is Acetylglutamate kinase from Photorhabdus laumondii subsp. laumondii (strain DSM 15139 / CIP 105565 / TT01) (Photorhabdus luminescens subsp. laumondii).